Reading from the N-terminus, the 187-residue chain is Putative adenylate kinase (187 aa).

Residues G10, G12, K13, T14, and I15 each contribute to the ATP site. The NMP stretch occupies residues 30-53 (SLSQFVIENKLYTEYDELRQSYII). Positions 103–113 (GRGWADIKVAE) are LID. R104 provides a ligand contact to ATP.

This sequence belongs to the adenylate kinase family. AK6 subfamily. Interacts with uS11. Not a structural component of 40S pre-ribosomes, but transiently interacts with them by binding to uS11.

The catalysed reaction is AMP + ATP = 2 ADP. The enzyme catalyses ATP + H2O = ADP + phosphate + H(+). Its function is as follows. Broad-specificity nucleoside monophosphate (NMP) kinase that catalyzes the reversible transfer of the terminal phosphate group between nucleoside triphosphates and monophosphates. Also has ATPase activity. Involved in the late maturation steps of the 30S ribosomal particles, specifically 16S rRNA maturation. While NMP activity is not required for ribosome maturation, ATPase activity is. Associates transiently with small ribosomal subunit protein uS11. ATP hydrolysis breaks the interaction with uS11. May temporarily remove uS11 from the ribosome to enable a conformational change of the ribosomal RNA that is needed for the final maturation step of the small ribosomal subunit. In Saccharolobus islandicus (strain L.S.2.15 / Lassen #1) (Sulfolobus islandicus), this protein is Putative adenylate kinase.